The following is a 209-amino-acid chain: MGKLEVIAHPLIQHKLSILRRTDTSTKAFRELVDEIAMLMGYEVLRDLPLEDVEIETPITKTVQKQIAGKKLAIVPILRAGIGMVDGLLSLVPAAKVGHIGMYRDEETLKPVEYLVKLPEDIDQRQIFVVDPMLATGGSAILAVDSLKKRGASHITFVCLVSAPEGVKALQEAHPDVDIFTAALDDHLNDHGYIVPGLGDAGDRLFGTK.

5-phospho-alpha-D-ribose 1-diphosphate-binding positions include Arg-79, Arg-104, and 131–139 (DPMLATGGS). Residues Ile-194 and 199–201 (GDA) contribute to the uracil site. Asp-200 contributes to the 5-phospho-alpha-D-ribose 1-diphosphate binding site.

It belongs to the UPRTase family. Mg(2+) serves as cofactor.

It catalyses the reaction UMP + diphosphate = 5-phospho-alpha-D-ribose 1-diphosphate + uracil. Its pathway is pyrimidine metabolism; UMP biosynthesis via salvage pathway; UMP from uracil: step 1/1. With respect to regulation, allosterically activated by GTP. In terms of biological role, catalyzes the conversion of uracil and 5-phospho-alpha-D-ribose 1-diphosphate (PRPP) to UMP and diphosphate. The chain is Uracil phosphoribosyltransferase from Streptococcus sanguinis (strain SK36).